The chain runs to 116 residues: U30-theraphotoxin-Cg1b (116 aa).

The N-terminal stretch at 1 to 17 is a signal peptide; the sequence is MKLCVLTIATLLVTATS. The propeptide occupies 18–53; that stretch reads LETQKEIAEGNELTREETPSLVEHKEDEAAAASEKR. Residues 25–45 form a disordered region; the sequence is AEGNELTREETPSLVEHKEDE. 4 disulfide bridges follow: cysteine 55–cysteine 69, cysteine 62–cysteine 75, cysteine 66–cysteine 112, and cysteine 68–cysteine 88.

This sequence belongs to the neurotoxin 03 (Tx2) family. 02 subfamily. As to expression, expressed by the venom gland.

The protein localises to the secreted. Functionally, probable ion channel inhibitor. The polypeptide is U30-theraphotoxin-Cg1b (Chilobrachys guangxiensis (Chinese earth tiger tarantula)).